The following is a 369-amino-acid chain: MLMKTTAVHAPASQGTSGIVLDSLRVAYHGNVVLKPLSLTIEPGEVLALIGPSGSGKTTVLRAVAGFVQPAGGRILIGDTDVTHLPPYKRGLAMVVQNYALFPHLKVEDNVAFGLRAQKQPKALINERVTQALKTVGMSDYATRYPHQLSGGQQQRVAIARAIAVRPRVLLLDEPLSALDAQIRHNMVEEIARLHRELPELTILYVTHDQTEALTLADKIGIMKDGSLIAHGETRALYHHPPNRFAAEFLGRANILSAIALGITEVPGLVDVSCGGAVIRAFSQGSHHGYNKLLCIRPQHLSLTPRSAYSNRFNATLQSVHWQGDLTHLLCDVAGETVRMVLTHVNPLPRVGDKLALWFEPDDAVLIEV.

The 232-residue stretch at 19 to 250 (IVLDSLRVAY…PPNRFAAEFL (232 aa)) folds into the ABC transporter domain. 51–58 (GPSGSGKT) lines the ATP pocket.

The protein belongs to the ABC transporter superfamily. 2-aminoethylphosphonate importer (TC 3.A.1.11.5) family.

Its subcellular location is the cell inner membrane. Probably part of the PhnSTUV complex (TC 3.A.1.11.5) involved in 2-aminoethylphosphonate import. Probably responsible for energy coupling to the transport system. This is Putative 2-aminoethylphosphonate import ATP-binding protein PhnT (phnT) from Salmonella typhi.